Here is a 712-residue protein sequence, read N- to C-terminus: Cyclomaltodextrin glucanotransferase (712 aa).

The N-terminal stretch at 1–27 (MKRFMKLTAVWTLWLSLTLGLLSPVHA) is a signal peptide. The interval 28 to 165 (APDTSVSNKQ…NIKVIIDFAP (138 aa)) is A1. Ca(2+) contacts are provided by aspartate 54, asparagine 56, asparagine 59, and asparagine 60. A disulfide bridge links cysteine 70 with cysteine 77. Ca(2+) is bound by residues glycine 78 and aspartate 80. A substrate-binding site is contributed by 127–128 (YW). Residue asparagine 166 coordinates Ca(2+). The b stretch occupies residues 166-229 (NHTSPASSDD…NLYDLADLNH (64 aa)). Position 167 (histidine 167) interacts with substrate. Isoleucine 217 contacts Ca(2+). Residue 220–223 (NLYD) coordinates substrate. Aspartate 226 provides a ligand contact to Ca(2+). The A2 stretch occupies residues 230-433 (NNSSVDVYLK…LRKSNPAIAY (204 aa)). Arginine 254 contributes to the substrate binding site. Catalysis depends on aspartate 256, which acts as the Nucleophile. 259–260 (KH) provides a ligand contact to substrate. Residue histidine 260 coordinates Ca(2+). The Proton donor role is filled by glutamate 284. Substrate-binding residues include histidine 354, aspartate 398, and arginine 402. Positions 434–522 (GSTQERWINN…GTAVWQYTTD (89 aa)) are c. Positions 523-608 (ATAPINGNVG…SNIYDNFEVL (86 aa)) are d. Residues 526–606 (PINGNVGPMM…AASNIYDNFE (81 aa)) enclose the IPT/TIG domain. Positions 607 to 712 (VLTGDQVTVR…TATVNVNWQP (106 aa)) constitute a CBM20 domain. An e region spans residues 609 to 712 (TGDQVTVRFV…TATVNVNWQP (104 aa)).

The protein belongs to the glycosyl hydrolase 13 family. In terms of assembly, monomer. The cofactor is Ca(2+).

The protein localises to the secreted. It carries out the reaction Cyclizes part of a (1-&gt;4)-alpha-D-glucan chain by formation of a (1-&gt;4)-alpha-D-glucosidic bond.. This chain is Cyclomaltodextrin glucanotransferase (cgt), found in Bacillus sp. (strain 38-2).